The following is a 786-amino-acid chain: Kazrin-A (786 aa).

Positions 44 to 70 (EEPGEPQEHQQQQQQQNHQDAPVQRQK) are disordered. Residues 52 to 62 (HQQQQQQQNHQ) are compositionally biased toward low complexity. Residues 92-270 (LLHEEVLRLQ…SLATLTKDVP (179 aa)) are a coiled coil. Residues 350 to 425 (MSDASVMEGE…LFDDSDSLSS (76 aa)) form a disordered region. 3 consecutive SAM domains span residues 457–522 (WRAG…YRDA), 535–599 (DHHW…LHTL), and 623–686 (WTCQ…SEEM). The tract at residues 703 to 760 (PLGTPPTLHRQSSLSSSSPSCHDDQQSLRRVKQQLGLSPKNLTARNISHQSRSGSFPR) is disordered. A compositionally biased stretch (polar residues) spans 742-758 (KNLTARNISHQSRSGSF).

The protein belongs to the kazrin family.

This is Kazrin-A (kazna) from Danio rerio (Zebrafish).